Reading from the N-terminus, the 265-residue chain is MADS-box protein JOINTLESS (265 aa).

The region spanning 3–57 is the MADS-box domain; it reads REKIQIKKIDNSTARQVTFSKRRRGLFKKAEELSVLCDADVALIIFSSTGKLFDY. The K-box domain occupies 87-177; sequence QLVENSNYSR…RQQVMEISNN (91 aa). Positions 196-232 are disordered; that stretch reads ENGFNNNNNEDGQSSESVTNPCNSIDPPPQDDDSSDT. A compositionally biased stretch (polar residues) spans 205–218; it reads EDGQSSESVTNPCN.

Widely expressed with highest levels in shoot tips and axillary buds. Also found in fully developed pedicels and flowers.

It localises to the nucleus. In terms of biological role, putative transcription factor that coordinates gene expression underlying the differentiation of the pedicel abscission zone. May also be involved in the maintenance of the inflorescence meristem state. The sequence is that of MADS-box protein JOINTLESS (J) from Solanum lycopersicum (Tomato).